The primary structure comprises 209 residues: Uracil phosphoribosyltransferase (209 aa).

Residues R78, R103, and 130–138 each bind 5-phospho-alpha-D-ribose 1-diphosphate; that span reads DPMFATGGT. Residues I193 and 198 to 200 each bind uracil; that span reads GDA. D199 contacts 5-phospho-alpha-D-ribose 1-diphosphate.

Belongs to the UPRTase family. Mg(2+) is required as a cofactor.

It catalyses the reaction UMP + diphosphate = 5-phospho-alpha-D-ribose 1-diphosphate + uracil. Its pathway is pyrimidine metabolism; UMP biosynthesis via salvage pathway; UMP from uracil: step 1/1. Its activity is regulated as follows. Allosterically activated by GTP. Functionally, catalyzes the conversion of uracil and 5-phospho-alpha-D-ribose 1-diphosphate (PRPP) to UMP and diphosphate. This Campylobacter fetus subsp. fetus (strain 82-40) protein is Uracil phosphoribosyltransferase.